The primary structure comprises 260 residues: 3'-5' ssDNA/RNA exonuclease TatD (260 aa).

Positions 92, 128, and 153 each coordinate a divalent metal cation.

It belongs to the metallo-dependent hydrolases superfamily. TatD-type hydrolase family. TatD subfamily. Monomer. The cofactor is Mg(2+).

The protein localises to the cytoplasm. In terms of biological role, 3'-5' exonuclease that prefers single-stranded DNA and RNA. May play a role in the H(2)O(2)-induced DNA damage repair. In Edwardsiella piscicida, this protein is 3'-5' ssDNA/RNA exonuclease TatD.